Here is a 381-residue protein sequence, read N- to C-terminus: Putative F-box protein At3g17500 (381 aa).

An F-box domain is found at 1-45 (MMSNLPLDLVEEILSRVPATSLKRLRSTCKSWNNCYKDQRFTEKH).

This is Putative F-box protein At3g17500 from Arabidopsis thaliana (Mouse-ear cress).